Reading from the N-terminus, the 434-residue chain is Innexin-14 (434 aa).

A run of 4 helical transmembrane segments spans residues 30 to 50 (LFTV…QHFG), 106 to 126 (WVPF…WCWA), 301 to 321 (IFIG…IGTV), and 365 to 385 (YLCA…GFLK).

The protein belongs to the pannexin family.

Its subcellular location is the cell membrane. It is found in the cell junction. The protein resides in the gap junction. In terms of biological role, structural component of the gap junctions. In Caenorhabditis elegans, this protein is Innexin-14 (inx-14).